A 465-amino-acid polypeptide reads, in one-letter code: tRNA modification GTPase MnmE (465 aa).

(6S)-5-formyl-5,6,7,8-tetrahydrofolate contacts are provided by R25, E87, and R126. The region spanning 222–386 (TIRVVLRGLP…LIERLVQFAE (165 aa)) is the TrmE-type G domain. GTP contacts are provided by residues 232-237 (NAGKSR), 251-257 (TDQAGTT), and 276-279 (DTAG). Mg(2+) contacts are provided by S236 and T257. A (6S)-5-formyl-5,6,7,8-tetrahydrofolate-binding site is contributed by K465.

It belongs to the TRAFAC class TrmE-Era-EngA-EngB-Septin-like GTPase superfamily. TrmE GTPase family. Homodimer. Heterotetramer of two MnmE and two MnmG subunits. Requires K(+) as cofactor.

The protein localises to the cytoplasm. Functionally, exhibits a very high intrinsic GTPase hydrolysis rate. Involved in the addition of a carboxymethylaminomethyl (cmnm) group at the wobble position (U34) of certain tRNAs, forming tRNA-cmnm(5)s(2)U34. This chain is tRNA modification GTPase MnmE, found in Rhodopirellula baltica (strain DSM 10527 / NCIMB 13988 / SH1).